A 146-amino-acid polypeptide reads, in one-letter code: Metallothiol transferase FosB (146 aa).

Residues Gly-4–Gly-120 form the VOC domain. Residues His-7, His-66, and Glu-116 each coordinate Mg(2+). Residue Glu-116 is the Proton donor/acceptor of the active site.

The protein belongs to the fosfomycin resistance protein family. FosB subfamily. In terms of assembly, homodimer. It depends on Mg(2+) as a cofactor.

The protein resides in the cytoplasm. In terms of biological role, metallothiol transferase which confers resistance to fosfomycin by catalyzing the addition of a thiol cofactor to fosfomycin. L-cysteine is probably the physiological thiol donor. This is Metallothiol transferase FosB from Shouchella clausii (strain KSM-K16) (Alkalihalobacillus clausii).